The primary structure comprises 230 residues: NAD(P)H-hydrate epimerase (230 aa).

A YjeF N-terminal domain is found at 11–218 (AIDVDQELFT…ALQRKYELNL (208 aa)). 61–65 (NNGGD) contributes to the (6S)-NADPHX binding site. The K(+) site is built by Asn-62 and Asp-126. (6S)-NADPHX contacts are provided by residues 130 to 136 (GFSFKPP) and Asp-159. A K(+)-binding site is contributed by Ser-162.

The protein belongs to the NnrE/AIBP family. Requires K(+) as cofactor.

The catalysed reaction is (6R)-NADHX = (6S)-NADHX. It catalyses the reaction (6R)-NADPHX = (6S)-NADPHX. Catalyzes the epimerization of the S- and R-forms of NAD(P)HX, a damaged form of NAD(P)H that is a result of enzymatic or heat-dependent hydration. This is a prerequisite for the S-specific NAD(P)H-hydrate dehydratase to allow the repair of both epimers of NAD(P)HX. This Drosophila erecta (Fruit fly) protein is NAD(P)H-hydrate epimerase.